We begin with the raw amino-acid sequence, 597 residues long: Membrane protein insertase YidC (597 aa).

A helical transmembrane segment spans residues 8 to 28; it reads YFVAIALSVLILIAWQFFYVS. The segment at 38–75 is disordered; that stretch reads AEKAQQAQSQPGTQQAAPGQAAPGQALPGGAIPSAAES. Residues 41–70 are compositionally biased toward low complexity; sequence AQQAQSQPGTQQAAPGQAAPGQALPGGAIP. Transmembrane regions (helical) follow at residues 372-392, 446-466, 491-511, and 535-555; these read LFGN…LIFF, WPIL…YVTI, LFGL…WPIV, and FTWM…GLVI.

This sequence belongs to the OXA1/ALB3/YidC family. Type 1 subfamily. As to quaternary structure, interacts with the Sec translocase complex via SecD. Specifically interacts with transmembrane segments of nascent integral membrane proteins during membrane integration.

It localises to the cell inner membrane. Required for the insertion and/or proper folding and/or complex formation of integral membrane proteins into the membrane. Involved in integration of membrane proteins that insert both dependently and independently of the Sec translocase complex, as well as at least some lipoproteins. Aids folding of multispanning membrane proteins. This is Membrane protein insertase YidC from Sinorhizobium medicae (strain WSM419) (Ensifer medicae).